The following is a 430-amino-acid chain: Adenylosuccinate synthetase (430 aa).

Residues 12 to 18 and 40 to 42 each bind GTP; these read GDEGKGK and GHT. Asp13 functions as the Proton acceptor in the catalytic mechanism. Residues Asp13 and Gly40 each contribute to the Mg(2+) site. IMP is bound by residues 13 to 16, 38 to 41, Thr128, Arg142, Gln223, Thr238, and Arg302; these read DEGK and NAGH. His41 acts as the Proton donor in catalysis. 298-304 serves as a coordination point for substrate; the sequence is TTTGRPR. GTP contacts are provided by residues Arg304, 330–332, and 412–414; these read SID and SVG.

Belongs to the adenylosuccinate synthetase family. As to quaternary structure, homodimer. Mg(2+) serves as cofactor.

It is found in the cytoplasm. It catalyses the reaction IMP + L-aspartate + GTP = N(6)-(1,2-dicarboxyethyl)-AMP + GDP + phosphate + 2 H(+). The protein operates within purine metabolism; AMP biosynthesis via de novo pathway; AMP from IMP: step 1/2. Its function is as follows. Plays an important role in the de novo pathway of purine nucleotide biosynthesis. Catalyzes the first committed step in the biosynthesis of AMP from IMP. This is Adenylosuccinate synthetase from Streptococcus gordonii (strain Challis / ATCC 35105 / BCRC 15272 / CH1 / DL1 / V288).